We begin with the raw amino-acid sequence, 230 residues long: Uracil-DNA glycosylase (230 aa).

The active-site Proton acceptor is the Asp-65.

It belongs to the uracil-DNA glycosylase (UDG) superfamily. UNG family.

It localises to the cytoplasm. The catalysed reaction is Hydrolyzes single-stranded DNA or mismatched double-stranded DNA and polynucleotides, releasing free uracil.. Functionally, excises uracil residues from the DNA which can arise as a result of misincorporation of dUMP residues by DNA polymerase or due to deamination of cytosine. The protein is Uracil-DNA glycosylase of Pediococcus pentosaceus (strain ATCC 25745 / CCUG 21536 / LMG 10740 / 183-1w).